Reading from the N-terminus, the 71-residue chain is Protein SlyX homolog (71 aa).

The tract at residues 49-71 is disordered; it reads KIKESQSSSSMMSNEPEPPPPHY.

It belongs to the SlyX family.

The sequence is that of Protein SlyX homolog from Pseudoalteromonas translucida (strain TAC 125).